A 504-amino-acid polypeptide reads, in one-letter code: Nuclear hormone receptor family member nhr-80 (504 aa).

Positions 27-103 (STRCLICSAQ…NGMKPGGVQP (77 aa)) form a DNA-binding region, nuclear receptor. 2 consecutive NR C4-type zinc fingers follow at residues 30 to 50 (CLIC…CSAC) and 66 to 86 (CITG…CRSC). Residues 177–192 (SSSTSFSASTTTNYST) show a composition bias toward low complexity. Residues 177–199 (SSSTSFSASTTTNYSTPGPSPMA) form a disordered region. Positions 214 to 466 (EEMKLGERRR…KLVLQLLNLD (253 aa)) constitute an NR LBD domain. The segment at 455–466 (LDKLVLQLLNLD) is AF-2.

It belongs to the nuclear hormone receptor family. As to quaternary structure, interacts with nuclear hormone receptor nhr-49; the interaction is direct. Expressed in the intestine and in some head and tail neurons, as well as the ventral nerve cord.

It is found in the nucleus. In terms of biological role, transcription factor. Binds to regulatory elements and regulates transcription of target genes, including acyltransferase dgat-2. As part of a lysosome-to-nucleus retrograde lipid signaling pathway, acts as a direct nuclear receptor of oleoylethanolamide (OEA) and, acting in concert with nuclear hormone receptor nhr-49, activates the transcription of genes promoting longevity and mitochondrial beta-oxidation. Required to modulate expression of delta-9 fatty acid desaturases, thereby regulating lipid metabolism; in some contexts, acting in concert with nhr-49. Involved in modulation of lipid metabolism in response to the citrate-induced mitochondrial unfolded protein response (mtUPR), acting downstream of transcription factor dve-1 and ubiquitin-like protein 5. Plays a role in modulating mitochondrial morphology and function. Involved in positively modulating life-span in a germline-dependent manner, acting in concert with nuclear hormone receptor daf-12. Plays a role in transgenerational lipid accumulation in response to a high-fat diet. The protein is Nuclear hormone receptor family member nhr-80 of Caenorhabditis elegans.